Consider the following 414-residue polypeptide: tRNA(Ile)-lysidine synthase (414 aa).

17 to 22 (SGGCDS) contributes to the ATP binding site.

It belongs to the tRNA(Ile)-lysidine synthase family.

It is found in the cytoplasm. It catalyses the reaction cytidine(34) in tRNA(Ile2) + L-lysine + ATP = lysidine(34) in tRNA(Ile2) + AMP + diphosphate + H(+). Ligates lysine onto the cytidine present at position 34 of the AUA codon-specific tRNA(Ile) that contains the anticodon CAU, in an ATP-dependent manner. Cytidine is converted to lysidine, thus changing the amino acid specificity of the tRNA from methionine to isoleucine. The chain is tRNA(Ile)-lysidine synthase from Exiguobacterium sibiricum (strain DSM 17290 / CCUG 55495 / CIP 109462 / JCM 13490 / 255-15).